A 1010-amino-acid polypeptide reads, in one-letter code: Trifunctional purine biosynthetic protein adenosine-3 (1010 aa).

N-acetylalanine is present on A2. S10 bears the Phosphoserine mark. The ATP-grasp domain maps to 111–318 (KEFMDRHGIP…LYEVIQSTLD (208 aa)). ATP contacts are provided by residues 190–193 (EELL), E197, R220, and N229. Positions 288 and 290 each coordinate Mg(2+). K350 carries the N6-acetyllysine modification. Residues 434 to 809 (SLTYKESGVD…HFSFEKKKAR (376 aa)) are AIRS domain. At S440 the chain carries Phosphoserine. A Phosphothreonine modification is found at T682. Residues S796 and S802 each carry the phosphoserine modification. The tract at residues 810–1010 (VAVLISGTGS…NGKICWVKEE (201 aa)) is GART domain. Position 818–820 (818–820 (GSN)) interacts with N(1)-(5-phospho-beta-D-ribosyl)glycinamide. Residues R871, 896-899 (MRIL), and N913 contribute to the (6R)-10-formyltetrahydrofolate site. H915 serves as the catalytic Proton donor. 947–951 (AEDVD) lines the (6R)-10-formyltetrahydrofolate pocket. 977–980 (KLAE) lines the N(1)-(5-phospho-beta-D-ribosyl)glycinamide pocket.

It in the N-terminal section; belongs to the GARS family. This sequence in the central section; belongs to the AIR synthase family. The protein in the C-terminal section; belongs to the GART family. Homodimer. It depends on Mg(2+) as a cofactor. The cofactor is Mn(2+).

The enzyme catalyses 5-phospho-beta-D-ribosylamine + glycine + ATP = N(1)-(5-phospho-beta-D-ribosyl)glycinamide + ADP + phosphate + H(+). The catalysed reaction is N(1)-(5-phospho-beta-D-ribosyl)glycinamide + (6R)-10-formyltetrahydrofolate = N(2)-formyl-N(1)-(5-phospho-beta-D-ribosyl)glycinamide + (6S)-5,6,7,8-tetrahydrofolate + H(+). It catalyses the reaction 2-formamido-N(1)-(5-O-phospho-beta-D-ribosyl)acetamidine + ATP = 5-amino-1-(5-phospho-beta-D-ribosyl)imidazole + ADP + phosphate + H(+). It participates in purine metabolism; IMP biosynthesis via de novo pathway; 5-amino-1-(5-phospho-D-ribosyl)imidazole from N(2)-formyl-N(1)-(5-phospho-D-ribosyl)glycinamide: step 2/2. The protein operates within purine metabolism; IMP biosynthesis via de novo pathway; N(1)-(5-phospho-D-ribosyl)glycinamide from 5-phospho-alpha-D-ribose 1-diphosphate: step 2/2. It functions in the pathway purine metabolism; IMP biosynthesis via de novo pathway; N(2)-formyl-N(1)-(5-phospho-D-ribosyl)glycinamide from N(1)-(5-phospho-D-ribosyl)glycinamide (10-formyl THF route): step 1/1. In terms of biological role, trifunctional enzyme that catalyzes three distinct reactions as part of the 'de novo' inosine monophosphate biosynthetic pathway. The sequence is that of Trifunctional purine biosynthetic protein adenosine-3 (GART) from Homo sapiens (Human).